An 88-amino-acid polypeptide reads, in one-letter code: uncharacterized protein (88 aa).

This is an uncharacterized protein from Thermoproteus tenax virus 1 (strain KRA1) (TTV1).